The sequence spans 289 residues: DNA repair protein rad14 (289 aa).

Residues Cys116, Cys119, Cys137, and Cys140 each contribute to the Zn(2+) site. Residues 116–140 (CFECDSIELDTKYFDIFHCRVCHTC) fold into a zinc finger.

This sequence belongs to the XPA family. Interacts with hrq1.

It is found in the nucleus. Its function is as follows. Involved in nucleotide excision repair (NER). Functional in repair of ultraviolet radiation induced damages and in mitotic mutation avoidance. Binds damaged DNA. Binds specifically to base-base mismatches or small insertion/deletion loops with unpaired nucleotides. Maintains GT repeat stability. Functions as a part of the short-patch excision repair system. In Schizosaccharomyces pombe (strain 972 / ATCC 24843) (Fission yeast), this protein is DNA repair protein rad14.